The following is a 201-amino-acid chain: Probable molybdenum cofactor guanylyltransferase (201 aa).

Residues 6 to 8 (LAG), lysine 18, aspartate 65, and aspartate 97 each bind GTP. A Mg(2+)-binding site is contributed by aspartate 97.

Belongs to the MobA family. Mg(2+) serves as cofactor.

It localises to the cytoplasm. The enzyme catalyses Mo-molybdopterin + GTP + H(+) = Mo-molybdopterin guanine dinucleotide + diphosphate. Transfers a GMP moiety from GTP to Mo-molybdopterin (Mo-MPT) cofactor (Moco or molybdenum cofactor) to form Mo-molybdopterin guanine dinucleotide (Mo-MGD) cofactor. In Staphylococcus haemolyticus (strain JCSC1435), this protein is Probable molybdenum cofactor guanylyltransferase.